A 156-amino-acid chain; its full sequence is Transcription elongation factor GreA (156 aa).

A coiled-coil region spans residues 6-75 (IYLTKEGYEK…ELENMLSKAE (70 aa)).

This sequence belongs to the GreA/GreB family.

In terms of biological role, necessary for efficient RNA polymerase transcription elongation past template-encoded arresting sites. The arresting sites in DNA have the property of trapping a certain fraction of elongating RNA polymerases that pass through, resulting in locked ternary complexes. Cleavage of the nascent transcript by cleavage factors such as GreA or GreB allows the resumption of elongation from the new 3'terminus. GreA releases sequences of 2 to 3 nucleotides. This chain is Transcription elongation factor GreA, found in Thermosipho africanus (strain TCF52B).